We begin with the raw amino-acid sequence, 105 residues long: ATP-dependent Clp protease adapter protein ClpS (105 aa).

The protein belongs to the ClpS family. In terms of assembly, binds to the N-terminal domain of the chaperone ClpA.

In terms of biological role, involved in the modulation of the specificity of the ClpAP-mediated ATP-dependent protein degradation. This chain is ATP-dependent Clp protease adapter protein ClpS, found in Aeromonas salmonicida (strain A449).